Reading from the N-terminus, the 411-residue chain is Protein Brevis radix-like 2 (411 aa).

2 disordered regions span residues 10–31 and 103–149; these read KDGG…KSLT and AAPS…DDDE. Over residues 20 to 31 the composition is skewed to polar residues; that stretch reads ATATPNSGKSLT. Residues 136–149 show a composition bias toward acidic residues; the sequence is GEEDYDDDDDDDDE. Residues 161–217 form the BRX 1 domain; it reads REWTAQVEPGVQITFVSIPGGAGNDLKRIRFSREMFNKWEAQRWWGENYDRVVELYN. Disordered stretches follow at residues 245–294 and 324–346; these read SRVG…VAAA and AGPA…ASVS. The segment covering 276-294 has biased composition (low complexity); sequence SRTASSKAQLSSSSSVAAA. A BRX 2 domain is found at 356-411; that stretch reads TEWVEQDEPGVSITIREFGDGTRELRRVRFSRERFGEERAKVWWEQNRDRIHAQYL.

This sequence belongs to the BRX family.

It is found in the nucleus. This is Protein Brevis radix-like 2 (BRXL2) from Oryza sativa subsp. japonica (Rice).